We begin with the raw amino-acid sequence, 449 residues long: N-succinylarginine dihydrolase (449 aa).

Residues 19-28 (GGLSYGNVAS), N110, and 137-138 (HR) contribute to the substrate site. Residues 23 to 43 (YGNVASQSNSQQGSNPREAAR) form a disordered region. A compositionally biased stretch (polar residues) spans 25 to 37 (NVASQSNSQQGSN). E174 is a catalytic residue. Substrate is bound at residue R214. H250 is an active-site residue. Substrate is bound by residues D252 and N365. The Nucleophile role is filled by C371.

The protein belongs to the succinylarginine dihydrolase family. As to quaternary structure, homodimer.

It catalyses the reaction N(2)-succinyl-L-arginine + 2 H2O + 2 H(+) = N(2)-succinyl-L-ornithine + 2 NH4(+) + CO2. It participates in amino-acid degradation; L-arginine degradation via AST pathway; L-glutamate and succinate from L-arginine: step 2/5. Functionally, catalyzes the hydrolysis of N(2)-succinylarginine into N(2)-succinylornithine, ammonia and CO(2). The protein is N-succinylarginine dihydrolase of Pseudomonas entomophila (strain L48).